Consider the following 240-residue polypeptide: uncharacterized protein (240 aa).

It to H.influenzae HI_0575.

This is an uncharacterized protein from Escherichia coli (strain K12).